The chain runs to 513 residues: Putative ATP-dependent RNA helicase QP509L (513 aa).

One can recognise a Helicase ATP-binding domain in the interval 110 to 262 (KKLLSPYGRF…KIIIHHLGQP (153 aa)). ATP is bound at residue 123-130 (LNTGLGKT). A DEAH box motif is present at residues 215–218 (DEAH).

This sequence belongs to the DEAD box helicase family. DEAH subfamily.

The catalysed reaction is ATP + H2O = ADP + phosphate + H(+). This chain is Putative ATP-dependent RNA helicase QP509L, found in African swine fever virus (isolate Tick/South Africa/Pretoriuskop Pr4/1996) (ASFV).